Reading from the N-terminus, the 236-residue chain is SERTA domain-containing protein 1 (236 aa).

The disordered stretch occupies residues 1–20; sequence MLSKGLKRKREEEEEKEPLA. The 48-residue stretch at 38–85 folds into the SERTA domain; sequence PAVASSSLFDLSVLKLHHSLQQSEPDLRHLVLVVNTLRRIQASMAPAA. The segment at 189 to 211 is disordered; the sequence is PASEGLKPGPEDGPGKEEAPELD. Residues 197–207 are compositionally biased toward basic and acidic residues; the sequence is GPEDGPGKEEA.

As to quaternary structure, interacts with the PHD-bromodomain of TIF1, TRIM28/TIF1B and p300/CBP. Interacts with E2F1 and TFDP1; modulates transactivation activity of TFDP1/E2F complexes. Also interacts with CDK4. Post-translationally, polyubiquitinated, which promotes proteasomal degradation.

Acts at E2F-responsive promoters as coregulator to integrate signals provided by PHD- and/or bromodomain-containing transcription factors. Stimulates E2F1/TFDP1 transcriptional activity. Renders the activity of cyclin D1/CDK4 resistant to the inhibitory effects of CDKN2A/p16INK4A. The protein is SERTA domain-containing protein 1 (SERTAD1) of Homo sapiens (Human).